The chain runs to 192 residues: Thymidine kinase (192 aa).

Residues 9–16 (SSMNAGKS) and 87–90 (DEAQ) contribute to the ATP site. Catalysis depends on E88, which acts as the Proton acceptor. Residues C145, C147, C182, and H185 each contribute to the Zn(2+) site.

This sequence belongs to the thymidine kinase family. In terms of assembly, homotetramer.

Its subcellular location is the cytoplasm. It carries out the reaction thymidine + ATP = dTMP + ADP + H(+). This is Thymidine kinase from Colwellia psychrerythraea (strain 34H / ATCC BAA-681) (Vibrio psychroerythus).